A 290-amino-acid chain; its full sequence is Phosphoribulokinase (290 aa).

12–20 (GSSGAGTTS) contacts ATP.

Belongs to the phosphoribulokinase family.

The enzyme catalyses D-ribulose 5-phosphate + ATP = D-ribulose 1,5-bisphosphate + ADP + H(+). Its pathway is carbohydrate biosynthesis; Calvin cycle. The polypeptide is Phosphoribulokinase (cbbP) (Nitrobacter vulgaris).